We begin with the raw amino-acid sequence, 886 residues long: Inter-alpha-trypsin inhibitor heavy chain H3 (886 aa).

The first 18 residues, methionine 1–glycine 18, serve as a signal peptide directing secretion. Residues phenylalanine 19–arginine 30 constitute a propeptide that is removed on maturation. The VIT domain maps to leucine 26–glutamate 155. Asparagine 88 is a glycosylation site (N-linked (GlcNAc...) asparagine). Residues proline 279–glutamate 439 enclose the VWFA domain. The N-linked (GlcNAc...) asparagine glycan is linked to asparagine 577. An Aspartate 1-(chondroitin 4-sulfate)-ester modification is found at aspartate 646. Positions proline 647–phenylalanine 886 are excised as a propeptide.

This sequence belongs to the ITIH family. I-alpha-I plasma protease inhibitors are assembled from one or two heavy chains (HC) and one light chain, bikunin. Pre-alpha-inhibitor (P-alpha-I) is composed of ITIH3/HC3 and bikunin. Post-translationally, heavy chains are linked to bikunin via chondroitin 4-sulfate esterified to the alpha-carboxyl of the C-terminal aspartate after propeptide cleavage.

Its subcellular location is the secreted. In terms of biological role, may act as a carrier of hyaluronan in serum or as a binding protein between hyaluronan and other matrix protein, including those on cell surfaces in tissues to regulate the localization, synthesis and degradation of hyaluronan which are essential to cells undergoing biological processes. In Mesocricetus auratus (Golden hamster), this protein is Inter-alpha-trypsin inhibitor heavy chain H3 (ITIH3).